We begin with the raw amino-acid sequence, 534 residues long: MKQKFIFVTGGVVSSIGKGLTAASLGALLEGRGHKVTIMKFDPYLNVDPGTMSPLQHGEVYVTEDGAETDLDLGHYERFTSALMNRSNSVSTGQIYDTVLNRERRGDYLGGTVQVIPHITEEIKARIYEAAQGSEIILVEIGGTVGDIESQPFLEAIRQMRIDVGQENSVLVHVTYVPYIAAAGELKSKPTQHSVKELREIGLQPDFLVCRSEKVIDDNLKAKIGLFCSVKPENVIAAQDSRFIYEVPLALHREKLDELIVARLGLSAGKLNMKGWQNLVKILGNPSHTVKIGVVGKYVDLKESYKSLHEALVHGGVANNARVEIIYVDSEKVTDKTVHSLLGKVDGILVPGGFGTRGVEGKITAIKYAREKRVPFFGICFGMQLSAIEFARNVCGIKDATSREFHAENKRTGNFVIDSMAEQRGVINKGGTMRLGAFPCAIASGSRAYQVYKASSIMERHRHRFEFNNKYKDLFEKNGMMASGICKERDLVEIVELPDHPWFVGVQFHPEFKSKPLAPHPLFVHFVKASLKKK.

The tract at residues 1–266 (MKQKFIFVTG…DELIVARLGL (266 aa)) is amidoligase domain. CTP is bound at residue Ser-14. UTP is bound at residue Ser-14. Residues 15 to 20 (SIGKGL) and Asp-72 each bind ATP. Residues Asp-72 and Glu-140 each contribute to the Mg(2+) site. Residues 147 to 149 (DIE), 187 to 192 (KSKPTQ), and Lys-223 contribute to the CTP site. Residues 187 to 192 (KSKPTQ) and Lys-223 contribute to the UTP site. The 244-residue stretch at 291-534 (KIGVVGKYVD…HFVKASLKKK (244 aa)) folds into the Glutamine amidotransferase type-1 domain. An L-glutamine-binding site is contributed by Gly-353. Cys-380 acts as the Nucleophile; for glutamine hydrolysis in catalysis. L-glutamine-binding positions include 381-384 (FGMQ), Glu-404, and Arg-464. Residues His-509 and Glu-511 contribute to the active site.

The protein belongs to the CTP synthase family. Homotetramer.

The catalysed reaction is UTP + L-glutamine + ATP + H2O = CTP + L-glutamate + ADP + phosphate + 2 H(+). The enzyme catalyses L-glutamine + H2O = L-glutamate + NH4(+). It catalyses the reaction UTP + NH4(+) + ATP = CTP + ADP + phosphate + 2 H(+). It functions in the pathway pyrimidine metabolism; CTP biosynthesis via de novo pathway; CTP from UDP: step 2/2. With respect to regulation, allosterically activated by GTP, when glutamine is the substrate; GTP has no effect on the reaction when ammonia is the substrate. The allosteric effector GTP functions by stabilizing the protein conformation that binds the tetrahedral intermediate(s) formed during glutamine hydrolysis. Inhibited by the product CTP, via allosteric rather than competitive inhibition. Its function is as follows. Catalyzes the ATP-dependent amination of UTP to CTP with either L-glutamine or ammonia as the source of nitrogen. Regulates intracellular CTP levels through interactions with the four ribonucleotide triphosphates. This is CTP synthase from Bdellovibrio bacteriovorus (strain ATCC 15356 / DSM 50701 / NCIMB 9529 / HD100).